A 161-amino-acid polypeptide reads, in one-letter code: MATSKTIVLYLCQAPATASLYVSADTDADEPIIYFENITECLTDDQCDKFTYFAELKQEQALFMKKVYKHLVLKNEGAFNKHHVLFDAMIMYKTYVHLVDESAFGSNVINYCEQFITAIFEIFTLSSKIVVAVPVNWENDNLSVLLKHLHNLNLIGIEIVN.

This is P18 protein (P18) from Lepidoptera (butterflies and moths).